The sequence spans 445 residues: Phosphoglucosamine mutase (445 aa).

Catalysis depends on Ser102, which acts as the Phosphoserine intermediate. Residues Ser102, Asp240, Asp242, and Asp244 each contribute to the Mg(2+) site. At Ser102 the chain carries Phosphoserine.

It belongs to the phosphohexose mutase family. The cofactor is Mg(2+). Activated by phosphorylation.

It carries out the reaction alpha-D-glucosamine 1-phosphate = D-glucosamine 6-phosphate. Catalyzes the conversion of glucosamine-6-phosphate to glucosamine-1-phosphate. In Mycobacterium sp. (strain JLS), this protein is Phosphoglucosamine mutase.